The sequence spans 95 residues: Protein TusB (95 aa).

The protein belongs to the DsrH/TusB family. Heterohexamer, formed by a dimer of trimers. The hexameric TusBCD complex contains 2 copies each of TusB, TusC and TusD. The TusBCD complex interacts with TusE.

It is found in the cytoplasm. Functionally, part of a sulfur-relay system required for 2-thiolation of 5-methylaminomethyl-2-thiouridine (mnm(5)s(2)U) at tRNA wobble positions. This Escherichia coli (strain K12 / MC4100 / BW2952) protein is Protein TusB.